Consider the following 1188-residue polypeptide: Probable RNA helicase armi (1188 aa).

Position 723–730 (723–730 (GPPGSGKT)) interacts with ATP. The DEAG box signature appears at 862-865 (DEAG).

It belongs to the DNA2/NAM7 helicase family. SDE3 subfamily. As to quaternary structure, forms a complex with piwi and fs(1)Yb; this interaction is required for proper piRNA loading and nuclear localization of piwi. The interaction of piwi and fs(1)Yb is likely to occur via armi. In terms of tissue distribution, abundant in oocytes and syncytial blastoderm. Expressed at low level throughout development, including somatic tissues. First apparent early in oogenesis, in the cytoplasm of stem cells and mitotically dividing cystoblasts. In regions 2a and 2b of the germarium, it is most concentrated in the center of the germline cysts, where the pro-oocyte is located. In stage 1 and early stage 2 egg chambers, it accumulates at the anterior of the oocyte, near the ring canals. It also extends through the ring canals forming a branched structure that links the early oocyte with adjacent nurse cells. In stage 3 cysts, it accumulates at the posterior cortex and localizes to extensions that pass through the oocyte into the nurse cells. Through stages 4 to 7, it continues to be somewhat enriched at the posterior cortex of the oocyte, but at significantly lower level. In stage 9 to 10 egg chambers, it is found throughout the cytoplasm of the oocyte and nurse cells, with slight enrichment at the oocyte cortex.

The protein resides in the cytoplasm. It carries out the reaction ATP + H2O = ADP + phosphate + H(+). Probable RNA helicase required for axial polarization of the oocyte during early and mid oogenesis. Plays a central role in RNA interference (RNAi) process, a process that mediates mRNA destruction of translational repression. Required for the assembly of the RISC complex, a complex required for target RNA destruction or repression. May be required in the RISC assembly to unwind miRNAs, in the production of single-stranded miRNA from the double-stranded miRNA, a key step in RISC formation. Required both for the translational control of oskar (osk) mRNA and cytoskeletal polarization in the oocyte. Required for somatic primary piRNA biogenesis. Involved in repression of long interspersed nuclear elements (LINEs) including HeT-A, I-element and TART LINEs. The sequence is that of Probable RNA helicase armi from Drosophila melanogaster (Fruit fly).